A 296-amino-acid chain; its full sequence is 4-diphosphocytidyl-2-C-methyl-D-erythritol kinase (296 aa).

K11 is an active-site residue. 96 to 106 (PVSSGLAGGSA) provides a ligand contact to ATP. The active site involves D136.

It belongs to the GHMP kinase family. IspE subfamily.

The catalysed reaction is 4-CDP-2-C-methyl-D-erythritol + ATP = 4-CDP-2-C-methyl-D-erythritol 2-phosphate + ADP + H(+). It functions in the pathway isoprenoid biosynthesis; isopentenyl diphosphate biosynthesis via DXP pathway; isopentenyl diphosphate from 1-deoxy-D-xylulose 5-phosphate: step 3/6. Functionally, catalyzes the phosphorylation of the position 2 hydroxy group of 4-diphosphocytidyl-2C-methyl-D-erythritol. The polypeptide is 4-diphosphocytidyl-2-C-methyl-D-erythritol kinase (Anaplasma phagocytophilum (strain HZ)).